The primary structure comprises 93 residues: MPRSLKKGPFVDQHLFVKVANENEKGTKNVIKTWSRRSMIIPDMLGHTIAVHDGRKHIPVFVTESMVGHKLGEFALTRTFRGHVKDDRKGKRR.

It belongs to the universal ribosomal protein uS19 family.

In terms of biological role, protein S19 forms a complex with S13 that binds strongly to the 16S ribosomal RNA. This chain is Small ribosomal subunit protein uS19, found in Renibacterium salmoninarum (strain ATCC 33209 / DSM 20767 / JCM 11484 / NBRC 15589 / NCIMB 2235).